A 311-amino-acid polypeptide reads, in one-letter code: Porphobilinogen deaminase (311 aa).

C243 is modified (S-(dipyrrolylmethanemethyl)cysteine).

The protein belongs to the HMBS family. Monomer. Dipyrromethane serves as cofactor.

It carries out the reaction 4 porphobilinogen + H2O = hydroxymethylbilane + 4 NH4(+). Its pathway is porphyrin-containing compound metabolism; protoporphyrin-IX biosynthesis; coproporphyrinogen-III from 5-aminolevulinate: step 2/4. In terms of biological role, tetrapolymerization of the monopyrrole PBG into the hydroxymethylbilane pre-uroporphyrinogen in several discrete steps. This chain is Porphobilinogen deaminase, found in Aliivibrio fischeri (strain ATCC 700601 / ES114) (Vibrio fischeri).